The following is a 94-amino-acid chain: MPRAQDVAQSDATLSSPATPASYEAAMAELETLVASMESGELPLEASLAAYRRGAELVRYCQQVLERVEQQVRVLDGDALKPLAGEGTNEQGGA.

Belongs to the XseB family. Heterooligomer composed of large and small subunits.

The protein localises to the cytoplasm. The enzyme catalyses Exonucleolytic cleavage in either 5'- to 3'- or 3'- to 5'-direction to yield nucleoside 5'-phosphates.. Bidirectionally degrades single-stranded DNA into large acid-insoluble oligonucleotides, which are then degraded further into small acid-soluble oligonucleotides. In Ralstonia nicotianae (strain ATCC BAA-1114 / GMI1000) (Ralstonia solanacearum), this protein is Exodeoxyribonuclease 7 small subunit.